The chain runs to 109 residues: ATP-dependent Clp protease adapter protein ClpS 2 (109 aa).

The interval 1 to 24 (MAGDGGRSGPSTPSTSVITKTKPR) is disordered.

It belongs to the ClpS family. In terms of assembly, binds to the N-terminal domain of the chaperone ClpA.

In terms of biological role, involved in the modulation of the specificity of the ClpAP-mediated ATP-dependent protein degradation. The protein is ATP-dependent Clp protease adapter protein ClpS 2 of Rhodopseudomonas palustris (strain ATCC BAA-98 / CGA009).